The primary structure comprises 956 residues: Glycine dehydrogenase (decarboxylating) 2 (956 aa).

Residue Lys-706 is modified to N6-(pyridoxal phosphate)lysine.

This sequence belongs to the GcvP family. In terms of assembly, the glycine cleavage system is composed of four proteins: P, T, L and H. The cofactor is pyridoxal 5'-phosphate.

The catalysed reaction is N(6)-[(R)-lipoyl]-L-lysyl-[glycine-cleavage complex H protein] + glycine + H(+) = N(6)-[(R)-S(8)-aminomethyldihydrolipoyl]-L-lysyl-[glycine-cleavage complex H protein] + CO2. Functionally, the glycine cleavage system catalyzes the degradation of glycine. The P protein binds the alpha-amino group of glycine through its pyridoxal phosphate cofactor; CO(2) is released and the remaining methylamine moiety is then transferred to the lipoamide cofactor of the H protein. The polypeptide is Glycine dehydrogenase (decarboxylating) 2 (Colwellia psychrerythraea (strain 34H / ATCC BAA-681) (Vibrio psychroerythus)).